The chain runs to 378 residues: E3 ubiquitin-protein ligase ATL9 (378 aa).

Positions 1-33 are cleaved as a signal peptide; sequence MAILDTKSSRWIPHNLLFLLLLLLLQSVPYGFG. The chain crosses the membrane as a helical span at residues 51-71; sequence VVVVITVLFLVIFFMVFGSIF. The segment at 135-177 adopts an RING-type; atypical zinc-finger fold; the sequence is CAVCLCEFEDDETLRLMPPCCHVFHADCVDVWLSEHSTCPLCR. Disordered stretches follow at residues 187–211, 300–326, and 350–378; these read DDDD…DPER, ARSS…RKSN, and FSGD…DERV. Residues 193–207 are compositionally biased toward polar residues; sequence ESYSGTDPGTISSST. The span at 301–317 shows a compositional bias: low complexity; sequence RSSRSGYRSGSVGSERS. Basic and acidic residues predominate over residues 364–378; that stretch reads AGERSFERLRPDERV.

This sequence belongs to the RING-type zinc finger family. ATL subfamily.

The protein localises to the membrane. It catalyses the reaction S-ubiquitinyl-[E2 ubiquitin-conjugating enzyme]-L-cysteine + [acceptor protein]-L-lysine = [E2 ubiquitin-conjugating enzyme]-L-cysteine + N(6)-ubiquitinyl-[acceptor protein]-L-lysine.. The protein operates within protein modification; protein ubiquitination. Its function is as follows. E3 ubiquitin-protein ligase able to catalyze polyubiquitination with ubiquitin-conjugating enzyme E2 UBC8 in vitro. May be involved in the early steps of the plant defense signaling pathway. The chain is E3 ubiquitin-protein ligase ATL9 (ATL9) from Arabidopsis thaliana (Mouse-ear cress).